Reading from the N-terminus, the 420-residue chain is Protein Rv2184c (420 aa).

This sequence belongs to the arsA ATPase family.

The protein is Protein Rv2184c of Mycobacterium tuberculosis (strain ATCC 25618 / H37Rv).